The sequence spans 242 residues: tRNA (guanine-N(1)-)-methyltransferase (242 aa).

Residues G111 and 130 to 135 contribute to the S-adenosyl-L-methionine site; that span reads IGDYVL.

It belongs to the RNA methyltransferase TrmD family. As to quaternary structure, homodimer.

Its subcellular location is the cytoplasm. The enzyme catalyses guanosine(37) in tRNA + S-adenosyl-L-methionine = N(1)-methylguanosine(37) in tRNA + S-adenosyl-L-homocysteine + H(+). Functionally, specifically methylates guanosine-37 in various tRNAs. The chain is tRNA (guanine-N(1)-)-methyltransferase from Onion yellows phytoplasma (strain OY-M).